The chain runs to 493 residues: Glutamyl-tRNA(Gln) amidotransferase subunit A (493 aa).

Catalysis depends on charge relay system residues Lys78 and Ser158. The active-site Acyl-ester intermediate is the Ser182.

The protein belongs to the amidase family. GatA subfamily. In terms of assembly, heterotrimer of A, B and C subunits.

The catalysed reaction is L-glutamyl-tRNA(Gln) + L-glutamine + ATP + H2O = L-glutaminyl-tRNA(Gln) + L-glutamate + ADP + phosphate + H(+). Allows the formation of correctly charged Gln-tRNA(Gln) through the transamidation of misacylated Glu-tRNA(Gln) in organisms which lack glutaminyl-tRNA synthetase. The reaction takes place in the presence of glutamine and ATP through an activated gamma-phospho-Glu-tRNA(Gln). This Rickettsia bellii (strain OSU 85-389) protein is Glutamyl-tRNA(Gln) amidotransferase subunit A.